The following is a 333-amino-acid chain: MADQDGDKSGYRQINKALNICAFDDYLKGQRAHLPQIPAVEQLTPRVLRVLGQNAGKFTLQGTNTFIVGKGRDRIIVDTSGGEEEWIELIQETLLDRGINITHVLLTHWHGDHTGGVPDLIRLYPHLKDHIYKNEPERDQQAIQDGQIFAVQGATIRALHAPGHSTDHMCFILEEEHAMFTGDNILGHGTSAVEDLGTFMASLQTMADQNCKTGYSAHGVTIDNLPIKISAELTKLLRREKQVLSALAQFRKRGERCAALRDIVTEIYGQALEEDTRRLALEPFIDEVLRKLAGDGRVAFQKRGGLKKWYSLEMEMAVDAKAAQVAQARAIAV.

The Zn(2+) site is built by His-108, His-110, Asp-112, and His-113. Asp-112 (proton donor/acceptor) is an active-site residue.

The protein belongs to the metallo-beta-lactamase superfamily. The cofactor is Zn(2+).

It catalyses the reaction atrochrysone carboxyl-[ACP] + H2O = atrochrysone carboxylate + holo-[ACP] + H(+). The protein operates within secondary metabolite biosynthesis. In terms of biological role, atrochrysone carboxyl ACP thioesterase; part of the gene cluster that mediates the biosynthesis of an emodin derivative that may be involved in black Sigatoka disease of banana. The pathway begins with the synthesis of atrochrysone thioester by the polyketide synthase PKS8-1. The atrochrysone carboxyl ACP thioesterase MYCFIDRAFT_190111 then breaks the thioester bond and releases the atrochrysone carboxylic acid from PKS8-1. The decarboxylase MYCFIDRAFT_34057 then catalyzes the concerted decarboxylation-elimination required to convert atochrysone carboxylic acid into emodin anthrone, which is further oxidized to emodin by the anthrone oxygenase MYCFIDRAFT_34418. The functions of the other tailoring enzymes as well as the final product of the cluster have still to be identified. The chain is Atrochrysone carboxyl ACP thioesterase MYCFIDRAFT_190111 from Pseudocercospora fijiensis (strain CIRAD86) (Black leaf streak disease fungus).